The following is a 253-amino-acid chain: tRNA pseudouridine synthase A (253 aa).

Asp53 (nucleophile) is an active-site residue. Tyr112 contacts substrate.

The protein belongs to the tRNA pseudouridine synthase TruA family. As to quaternary structure, homodimer.

The catalysed reaction is uridine(38/39/40) in tRNA = pseudouridine(38/39/40) in tRNA. Formation of pseudouridine at positions 38, 39 and 40 in the anticodon stem and loop of transfer RNAs. The polypeptide is tRNA pseudouridine synthase A (Lactococcus lactis subsp. cremoris (strain SK11)).